The sequence spans 367 residues: Phospho-N-acetylmuramoyl-pentapeptide-transferase (367 aa).

Helical transmembrane passes span 34 to 54 (GAVVTGALFVFLFGPWIIDHL), 78 to 98 (TPTMGGLMILSGLTVGTVLWA), 101 to 121 (LNPYVWIVLAVTLGFGFVGFY), 135 to 155 (FGSKLRLLIEAAIALVACYAL), 175 to 195 (TVLHFGWFFVVFGAFVIVGAG), 206 to 226 (GLAIVPVMIATASFAMIAYLA), 246 to 266 (LAVLCGALLGAGLGFLWFNAP), 270 to 290 (IFMGDTGSLALGGMLGAIAVA), 295 to 315 (IVLAVIGGLFVLEAVSVIVQV), and 344 to 364 (QIVIRFWIISVMLALAGLSTL).

The protein belongs to the glycosyltransferase 4 family. MraY subfamily. Mg(2+) serves as cofactor.

It is found in the cell inner membrane. The catalysed reaction is UDP-N-acetyl-alpha-D-muramoyl-L-alanyl-gamma-D-glutamyl-meso-2,6-diaminopimeloyl-D-alanyl-D-alanine + di-trans,octa-cis-undecaprenyl phosphate = di-trans,octa-cis-undecaprenyl diphospho-N-acetyl-alpha-D-muramoyl-L-alanyl-D-glutamyl-meso-2,6-diaminopimeloyl-D-alanyl-D-alanine + UMP. It participates in cell wall biogenesis; peptidoglycan biosynthesis. In terms of biological role, catalyzes the initial step of the lipid cycle reactions in the biosynthesis of the cell wall peptidoglycan: transfers peptidoglycan precursor phospho-MurNAc-pentapeptide from UDP-MurNAc-pentapeptide onto the lipid carrier undecaprenyl phosphate, yielding undecaprenyl-pyrophosphoryl-MurNAc-pentapeptide, known as lipid I. In Bradyrhizobium diazoefficiens (strain JCM 10833 / BCRC 13528 / IAM 13628 / NBRC 14792 / USDA 110), this protein is Phospho-N-acetylmuramoyl-pentapeptide-transferase.